The following is a 331-amino-acid chain: MAQLFYDSDADLGLLNGKTVAIIGYGSQGHAHALNLKDSGVNVVVGLYEGSRSAEKAKADGLEVLTVAEASAKADWIMVLLPDEFQKDVYEKEIAPHLKSGKVLSFAHGFNIRFELIKPPADVDVVMIAPKGPGHTVRWEYQNGQGVPALFAIEQDASGNARGLTMAYAKGIGGTRAGILETNFKEETETDLFGEQAVLCGGLSELVKAGFETLVEAGYQPELAYFECMHEVKLIVDLMVKGGLTSMRDSISNTAEYGDYVSGPRLITADTKAEMKRVLADIQDGTFARNFVAECDAGKPEMKKIRDRDAQHPIEKVGKGLRSMFSWLKDA.

Residues alanine 2–threonine 182 enclose the KARI N-terminal Rossmann domain. Residues tyrosine 25–glutamine 28, serine 51, serine 53, and aspartate 83–glutamine 86 contribute to the NADP(+) site. Histidine 108 is a catalytic residue. Glycine 134 contributes to the NADP(+) binding site. One can recognise a KARI C-terminal knotted domain in the interval asparagine 183–leucine 328. Positions 191, 195, 227, and 231 each coordinate Mg(2+). Serine 252 serves as a coordination point for substrate.

It belongs to the ketol-acid reductoisomerase family. The cofactor is Mg(2+).

It carries out the reaction (2R)-2,3-dihydroxy-3-methylbutanoate + NADP(+) = (2S)-2-acetolactate + NADPH + H(+). It catalyses the reaction (2R,3R)-2,3-dihydroxy-3-methylpentanoate + NADP(+) = (S)-2-ethyl-2-hydroxy-3-oxobutanoate + NADPH + H(+). The protein operates within amino-acid biosynthesis; L-isoleucine biosynthesis; L-isoleucine from 2-oxobutanoate: step 2/4. It participates in amino-acid biosynthesis; L-valine biosynthesis; L-valine from pyruvate: step 2/4. Functionally, involved in the biosynthesis of branched-chain amino acids (BCAA). Catalyzes an alkyl-migration followed by a ketol-acid reduction of (S)-2-acetolactate (S2AL) to yield (R)-2,3-dihydroxy-isovalerate. In the isomerase reaction, S2AL is rearranged via a Mg-dependent methyl migration to produce 3-hydroxy-3-methyl-2-ketobutyrate (HMKB). In the reductase reaction, this 2-ketoacid undergoes a metal-dependent reduction by NADPH to yield (R)-2,3-dihydroxy-isovalerate. This is Ketol-acid reductoisomerase (NADP(+)) from Synechococcus sp. (strain CC9902).